We begin with the raw amino-acid sequence, 309 residues long: tRNA pseudouridine synthase B (309 aa).

The active-site Nucleophile is the Asp39. The PUA domain occupies 229 to 306; it reads LPRVVVHQES…ERVLTLRKVF (78 aa).

This sequence belongs to the pseudouridine synthase TruB family. Type 1 subfamily.

The enzyme catalyses uridine(55) in tRNA = pseudouridine(55) in tRNA. In terms of biological role, responsible for synthesis of pseudouridine from uracil-55 in the psi GC loop of transfer RNAs. In Thermotoga maritima (strain ATCC 43589 / DSM 3109 / JCM 10099 / NBRC 100826 / MSB8), this protein is tRNA pseudouridine synthase B.